Reading from the N-terminus, the 141-residue chain is Hemoglobin subunit alpha-1 (141 aa).

A Globin domain is found at 1 to 141 (VLTDAEKKEV…VATVLTSKYR (141 aa)). Histidine 58 provides a ligand contact to O2. Histidine 87 is a binding site for heme b.

It belongs to the globin family. Heterotetramer of two alpha chains and two beta chains. As to expression, red blood cells.

Its function is as follows. Involved in oxygen transport from the lung to the various peripheral tissues. The polypeptide is Hemoglobin subunit alpha-1 (Tachyglossus aculeatus aculeatus (Southeast Australian short-beaked echidna)).